The chain runs to 1061 residues: Bifunctional cytochrome P450/NADPH--P450 reductase 1 (1061 aa).

A cytochrome P450 region spans residues 1-475; that stretch reads MKETSPIPQP…AEKAAPDEQK (475 aa). Cys403 is a heme binding site. The interval 476-1061 is NADPH--P450 reductase; the sequence is EKTEAKGASV…MYAKDVWAGI (586 aa). Residues 493-632 enclose the Flavodoxin-like domain; sequence LLVLYGSDTG…QLDEWKKSMW (140 aa). FMN-binding positions include 499–504, 546–549, 580–582, and 588–590; these read SDTGTA, SYNG, CGD, and TYQ. The FAD-binding FR-type domain maps to 671-904; sequence YEASHASIAE…RTPESRFQLP (234 aa).

This sequence in the N-terminal section; belongs to the cytochrome P450 family. FAD is required as a cofactor. FMN serves as cofactor. Requires heme b as cofactor.

The protein resides in the cytoplasm. The catalysed reaction is an organic molecule + reduced [NADPH--hemoprotein reductase] + O2 = an alcohol + oxidized [NADPH--hemoprotein reductase] + H2O + H(+). It catalyses the reaction 2 oxidized [cytochrome P450] + NADPH = 2 reduced [cytochrome P450] + NADP(+) + H(+). In terms of biological role, functions as a fatty acid monooxygenase. Catalyzes hydroxylation of a range of long-chain fatty acids, with a preference for long-chain unsaturated and branched-chain fatty acids over saturated fatty acids. Hydroxylation of myristic acid occurs mainly at the omega-2 position. Also displays a NADPH-dependent reductase activity in the C-terminal domain, which allows electron transfer from NADPH to the heme iron of the cytochrome P450 N-terminal domain. Is also able to catalyze efficient oxidation of sodium dodecyl sulfate (SDS). The sequence is that of Bifunctional cytochrome P450/NADPH--P450 reductase 1 from Bacillus subtilis (strain 168).